The sequence spans 518 residues: Circadian clock oscillator protein KaiC (518 aa).

The 247-residue stretch at 1 to 247 (MTNLPEHQSS…FTINNGINIF (247 aa)) folds into the KaiC 1 domain. ATP contacts are provided by Ser49, Gly50, Thr51, Gly52, Lys53, Thr54, and Leu55. Residue Thr54 coordinates Mg(2+). Glu78 functions as the Proton acceptor in CI (KaiC 1) in the catalytic mechanism. Ser90 provides a ligand contact to ATP. The B-loop, required to bind KaiB and SasA stretch occupies residues 116 to 123 (QEVAGDFD). Positions 225, 226, 227, 229, and 231 each coordinate ATP. A linker region spans residues 248-260 (PLGAMRLTQRSSN). The region spanning 261–518 (VRVSSGVKTL…AKGMQDLESE (258 aa)) is the KaiC 2 domain. 7 residues coordinate ATP: Thr290, Gly291, Thr292, Gly293, Lys294, Thr295, and Leu296. Residue Thr295 coordinates Mg(2+). Glu318 contributes to the Mg(2+) binding site. Residue Glu318 is the Proton acceptor in CII (KaiC 2) of the active site. Trp331 serves as a coordination point for ATP. A Phosphoserine; by autocatalysis modification is found at Ser431. A Phosphothreonine; by autocatalysis modification is found at Thr432. Residues Arg451, Lys457, Met458, Arg459, Ser461, His463, and Lys465 each coordinate ATP. Positions 488–497 (GIISGTPTRI) are A-loop, interacts with KaiA.

It belongs to the KaiC family. In terms of assembly, homohexamer resembling 2 stacked donuts rings with a central pore nearly blocked on one side; hexamerization is dependent on ATP-binding. Binds 2 ATP per monomer, at the subunit interface on each ring. The KaiABC complex composition changes during the circadian cycle to control KaiC phosphorylation. Complexes KaiC(6), KaiA(2-4):KaiC(6), KaiB(6):KaiC(6) and KaiC(6):KaiB(6):KaiA(12) are among the most important forms, many form cooperatively. Interacts with SasA, probably as 1 SasA trimer:1 KaiC homohexamer, has highest affinity for unphosphorylated SasA. The CI domain binds to KaiB and SasA; as they have a similar fold they compete for the same site on CI. KaiB assumes a thioredoxin-like form called KaiB(fs) when bound to KaiC. It depends on Mg(2+) as a cofactor. Phosphorylated on serine/threonine residues by autocatalysis. Both phosphorylated and unphosphorylated forms exist. Both autophosphorylates and autodephosphorylates. Phosphorylated form correlates with clock speed. Post-translationally, phosphorylated on serine and threonine residues by autocatalysis. Has a 4 step phosphorylation cycle; the autokinase acts first on Thr-432, then Ser-431. When Ser-431 is modified KaiC switches to an autophosphatase mode, acting first on phospho-Thr-432 then phospho-Ser-431.

The catalysed reaction is L-seryl-[protein] + ATP = O-phospho-L-seryl-[protein] + ADP + H(+). The enzyme catalyses L-threonyl-[protein] + ATP = O-phospho-L-threonyl-[protein] + ADP + H(+). It carries out the reaction ATP + H2O = ADP + phosphate + H(+). Its activity is regulated as follows. The interaction with KaiA enhances its phosphorylation status, while the interaction with KaiB decreases it. Functionally, central component of the KaiABC oscillator complex, which constitutes the main circadian regulator in cyanobacteria. Complex composition changes during the circadian cycle to control KaiC phosphorylation. KaiA stimulates KaiC autophosphorylation, while KaiB sequesters KaiA, leading to KaiC autodephosphorylation. Clock output pathways impact the RpaA transcriptional regulator. KaiC enhances the autophosphorylation activity of SasA, which then transfers its phosphate group to RpaA to activate it. KaiB and KaiC together enhance the phospho-RpaA dephosphatase activity of CikA. Stimulates SasA autophosphorylation. Fully phosphorylated KaiC (tested with phosphomimetic Asp-431-432-Asp) is the best stimulant, requires the ATPase activity of the CII domain. Unphosphorylated SasA associates with KaiC and its autophosphorylation activity is enhanced. Phospho-SasA is released and associates with RpaA, transferring its phosphate group. Formation of the KaiA:KaiB complex is promoted by KaiC, helping switch KaiC from its autophosphorylation to autodephosphatase function. In terms of biological role, has a weak, temperature-independent ATPase activity (about 14 molecules of ATP per day) that defines the circadian period. ATPase activity is mostly contributed by the CI domain; the CII domain augments the activity. The addition of KaiA increases activity. ATPase is inhibited during the KaiC phosphorylating phase and activated during the KaiC dephosphorylating phase. The protein is Circadian clock oscillator protein KaiC of Thermosynechococcus vestitus (strain NIES-2133 / IAM M-273 / BP-1).